The sequence spans 264 residues: NAD kinase (264 aa).

D45 acts as the Proton acceptor in catalysis. NAD(+)-binding positions include 45–46 (DG), H50, 121–122 (NE), R147, D149, A184, and Q224.

This sequence belongs to the NAD kinase family. A divalent metal cation is required as a cofactor.

It is found in the cytoplasm. The catalysed reaction is NAD(+) + ATP = ADP + NADP(+) + H(+). Its function is as follows. Involved in the regulation of the intracellular balance of NAD and NADP, and is a key enzyme in the biosynthesis of NADP. Catalyzes specifically the phosphorylation on 2'-hydroxyl of the adenosine moiety of NAD to yield NADP. This Lysinibacillus sphaericus (strain C3-41) protein is NAD kinase.